Here is a 370-residue protein sequence, read N- to C-terminus: MREETAEQPAPLRSGLTTGSCATATSLAAARLLLSGQISDAVEIVLPKGKQVQMRLEFCRRVDNFAEAGTLKDAGDDPDVTHGALVFARVRQEAAPGVRFVAGAGVGSVTRPGLVLAVGEPAINPVPRRMMTEHLLRLAEELGYSGGFEVTIGVEGGEALALKTMNPRLGILGGLSILGTSGIVRPFSCAAYIASIHQGIDVATTNGYRHIAACTGNASEDTMRRVYNIPDIALIEMGDFVGAVLKHLRKVPVDKLSLCGGFGKISKLAAGHMDLHSRHSSIDLPQLALWAAQVGADAALQQQILHANTSQQALAMCAAAGVPLGDEVCRHALAFARSVVPATVEVEVFAIDRQGGVVGQAGVALSKEHT.

It belongs to the CbiD family.

It catalyses the reaction Co-precorrin-5B + S-adenosyl-L-methionine = Co-precorrin-6A + S-adenosyl-L-homocysteine. It functions in the pathway cofactor biosynthesis; adenosylcobalamin biosynthesis; cob(II)yrinate a,c-diamide from sirohydrochlorin (anaerobic route): step 6/10. In terms of biological role, catalyzes the methylation of C-1 in cobalt-precorrin-5B to form cobalt-precorrin-6A. The protein is Cobalt-precorrin-5B C(1)-methyltransferase of Pseudomonas syringae pv. tomato (strain ATCC BAA-871 / DC3000).